A 271-amino-acid chain; its full sequence is 3-methyl-2-oxobutanoate hydroxymethyltransferase (271 aa).

Asp-53 and Asp-92 together coordinate Mg(2+). Residues 53 to 54, Asp-92, and Lys-120 contribute to the 3-methyl-2-oxobutanoate site; that span reads DS. Glu-122 serves as a coordination point for Mg(2+). Residue Glu-189 is the Proton acceptor of the active site.

The protein belongs to the PanB family. As to quaternary structure, homodecamer; pentamer of dimers. It depends on Mg(2+) as a cofactor.

It localises to the cytoplasm. The enzyme catalyses 3-methyl-2-oxobutanoate + (6R)-5,10-methylene-5,6,7,8-tetrahydrofolate + H2O = 2-dehydropantoate + (6S)-5,6,7,8-tetrahydrofolate. It functions in the pathway cofactor biosynthesis; (R)-pantothenate biosynthesis; (R)-pantoate from 3-methyl-2-oxobutanoate: step 1/2. Catalyzes the reversible reaction in which hydroxymethyl group from 5,10-methylenetetrahydrofolate is transferred onto alpha-ketoisovalerate to form ketopantoate. The polypeptide is 3-methyl-2-oxobutanoate hydroxymethyltransferase (Paraburkholderia phymatum (strain DSM 17167 / CIP 108236 / LMG 21445 / STM815) (Burkholderia phymatum)).